Consider the following 666-residue polypeptide: Calpain-10 (666 aa).

Residues 13–321 (LFRDAAFPAS…FDEVTIGYPV (309 aa)) enclose the Calpain catalytic domain. Active-site residues include C73, H238, and N263. Domain III stretches follow at residues 322–488 (TEAG…ISLS) and 507–648 (EWET…IHSQ).

This sequence belongs to the peptidase C2 family. Ubiquitous.

The protein resides in the cytoplasm. The protein localises to the nucleus. Its function is as follows. Calcium-regulated non-lysosomal thiol-protease which catalyzes limited proteolysis of substrates involved in cytoskeletal remodeling and signal transduction. May play a role in insulin-stimulated glucose uptake. The polypeptide is Calpain-10 (Capn10) (Rattus norvegicus (Rat)).